The following is a 1766-amino-acid chain: MSGGAALPVSQMELHKVNEVQFEIFKERQIKSYAVCLVEHAKSYANAADQSGEASMICVWVPLTSNSACETCHRKHPECPGHFGYIELAEPVFNIGVFDLVLLVLKCVCKTCGALLLNTREQDVHKKLQHMTGLNRLRQVAKMAEAKCRVSTSTEDDMGIDGFDSAPFNGGSGMGPGATRGCGASQPRVSRFYGIYPTLVIKAVHEEQDAEWHADKVRQVLDRVSDDDARLMGFDPQRCHPRDLVLTVLPVPPPQVRPAISFGGLRSDDELTHQIMSIVKRNNQLRRDKESDVQAAIDRSRALLQEHVATYFNNASTYYKPTKVNDTKKLKSLTERLKGKYGRLRGNLMGKRVDFSARTVITGDPNIDVDEVGVPFSVAMTLTFPERVNTINKKRLTEFARRTVYPSANYIHHPNGTITKLALLRDRSKVTLNIGDVVERHVINGDVVLFNRQPTLHRMSMMGHRVRVLNYNTFRLNLSCTTPYNADFDGDEMNLHVPQSLLTKAELIEMMMVPKNFVSPNKSAPCMGIVQDSLLGSYRLTDKDTFLDKYFVQSVALWLDLWQLPIPAILKPRPLWTGKQVFSLILPEVNHPATPQDRPPFPHNDSVVMIRRGQLLCGPITKSIVGAAPGSLIHVIFNEHGSDEVARFINGVQRVTTFFLLNFGFSVGVQDTVADSDTLRQMNDVLVKTRRNVEKIGAAANNRTLNRKAGMTLLQSFEADVNSALNKCREEAAKKALSNVRRTNSFKVMIEAGSKGTDLNICQIAVFVGQQNVAGSRIPFGFRRRTLPHFMLDDYGETSRGMANRGYVEGLKPHEFFFHTMAGREGLIDTAVKTSDTGYLQRKLIKALEDVHAAYDGTVRNANDELIQFMYGEDGLDGARIEGGQLFPLPFRDDKEMEDTYKYEYDVDGTFSGKVGGNYMDPHVRKMLRADPQNVRKLQEEYEQLTADREWSRKMLDLEDRDKLKLNLPVNPGRLIQNARSTMGKRSQVSNLSPITIIDHVRKLQEDLMKLFPSYHRGGDGYIRNTLSRERIESALTLFNVHLRQLLASKRVLKEYKLNDRAFEYLLKEIRTKYHQSLTTPGENIGAIAAQSCGEPATQMTLNTFHNAGISSKNVTLGVPRLLELLNVSRNQKHASMTVSLFPPYDEKRNAQKAQHLIEYCTLESITRRIQFIYDPDPRHTVVEADRDILELEWNVMDESDAELRIQEVVAGSPWVVRLELDVDMVTDKALDMKDVKQAILRVDESYIIETGMANNVRQRTIRMRSRYNEGADSIPKLKREIPALLARVHLRGIPGVRRALLKDTTEFTVDQATGKMSGNKIWAIDTDGTALRRAFIGVVGEDGKNIINAVKTSSNKVPEVCSLLGIEAARSKMLTELREAYLAYGLNINYRHYTILVDTICQHGYLMAVSRSGINRSDTSGPLMRCSFEETVKVLMAAASFGECDPVRGVSANLVLGNQARVGTGLFDLVLNMAALQQAVPQAEAVAPGKDVNVYHSLGSTLQQNIQSSIAYRPRDHDATPFVNNASLFLRQGFGGGSSSAPVTASAPYNPSTTYHGGRLEASAVHRSQAYSTSPALEYGGREASASQMYSVMSSASAFNPVSTRMSSVAHSYSEYSEASSYHLQHSVAPTSMQASLPRTDNSMTMQGIGSVSVPYTPHAMSSAAPPSQVYASTEVGRSHSEDSRSQSALYVPTLSPTHAGYAIRGDEPSTHRSDSNVMWREAGGGREQDEEDDLSTNYMPTAKTPQQAAPPTAAEFGDEEEEEQ.

Zn(2+) is bound by residues cysteine 69, cysteine 72, cysteine 79, and histidine 82. Aspartate 487, aspartate 489, and aspartate 491 together coordinate Mg(2+). A bridging helix region spans residues 813–825 (PHEFFFHTMAGRE). The segment at 1660–1766 (HAMSSAAPPS…EFGDEEEEEQ (107 aa)) is disordered. Basic and acidic residues predominate over residues 1706–1716 (RGDEPSTHRSD). The segment covering 1742–1756 (PTAKTPQQAAPPTAA) has biased composition (low complexity).

The protein belongs to the RNA polymerase beta' chain family. As to quaternary structure, component of the RNA polymerase II (Pol II) complex consisting of 12 subunits.

The protein localises to the nucleus. The catalysed reaction is RNA(n) + a ribonucleoside 5'-triphosphate = RNA(n+1) + diphosphate. Functionally, DNA-dependent RNA polymerase catalyzes the transcription of DNA into RNA using the four ribonucleoside triphosphates as substrates. Largest and catalytic component of RNA polymerase II which synthesizes mRNA precursors and many functional non-coding RNAs. Forms the polymerase active center together with the second largest subunit. Pol II is the central component of the basal RNA polymerase II transcription machinery. It is composed of mobile elements that move relative to each other. RPB1 is part of the core element with the central large cleft, the clamp element that moves to open and close the cleft and the jaws that are thought to grab the incoming DNA template. At the start of transcription, a single-stranded DNA template strand of the promoter is positioned within the central active site cleft of Pol II. A bridging helix emanates from RPB1 and crosses the cleft near the catalytic site and is thought to promote translocation of Pol II by acting as a ratchet that moves the RNA-DNA hybrid through the active site by switching from straight to bent conformations at each step of nucleotide addition. During transcription elongation, Pol II moves on the template as the transcript elongates. The polypeptide is DNA-directed RNA polymerase II subunit RPB1-B (TRP5.9) (Trypanosoma brucei brucei).